The following is a 655-amino-acid chain: Endoplasmic reticulum chaperone BiP (655 aa).

Residues 1 to 19 (MMKFTVVAAALLLLGAVRA) form the signal peptide. The required for interaction with ELAPOR1 stretch occupies residues 1-81 (MMKFTVVAAA…EGERLIGDAA (81 aa)). 37-40 (GTTY) serves as a coordination point for ATP. Serine 87 is subject to Phosphoserine. An ATP-binding site is contributed by lysine 97. Lysine 126 is subject to N6-acetyllysine. The segment at 126-281 (KPYIQVDIGG…KKKTGKDVRK (156 aa)) is nucleotide-binding (NBD). Tyrosine 161 bears the 3'-nitrotyrosine mark. Lysine 214 carries the post-translational modification N6-acetyllysine. Residue 228–230 (GGT) participates in ATP binding. At lysine 272 the chain carries N6-acetyllysine. 294-301 (EKAKRALS) serves as a coordination point for ATP. Residue lysine 327 is modified to N6-acetyllysine. Lysine 353 participates in a covalent cross-link: Glycyl lysine isopeptide (Lys-Gly) (interchain with G-Cter in SUMO2). Lysine 354 is subject to N6-acetyllysine; alternate. A Glycyl lysine isopeptide (Lys-Gly) (interchain with G-Cter in SUMO1); alternate cross-link involves residue lysine 354. An ATP-binding site is contributed by 365 to 368 (GSTR). The segment at 410–420 (QDTGDLVLLDV) is interdomain linker. A substrate-binding (SBD) region spans residues 421–501 (CPLTLGIETV…PRGVPQIEVT (81 aa)). Lysine 448 carries the N6-succinyllysine modification. Arginine 493 is subject to Omega-N-methylarginine. Threonine 519 is modified (O-AMP-threonine; alternate). Threonine 519 is modified (phosphothreonine; alternate). Lysine 586 carries the N6,N6,N6-trimethyllysine; by METTL21A; in vitro modification. N6,N6-dimethyllysine; alternate is present on lysine 586. Lysine 586 bears the N6-methyllysine; alternate mark. At lysine 592 the chain carries N6-methyllysine. The disordered stretch occupies residues 632-655 (ISKLYGSGGPPPTGEEDTSEKDEL). 2 positions are modified to phosphothreonine: threonine 644 and threonine 649. A compositionally biased stretch (acidic residues) spans 645-655 (GEEDTSEKDEL). Residue serine 650 is modified to Phosphoserine. Positions 652 to 655 (KDEL) match the Prevents secretion from ER motif.

This sequence belongs to the heat shock protein 70 family. Monomer and homooligomer; homooligomerization via the interdomain linker inactivates the chaperone activity and acts as a storage of HSPA5/BiP molecules. Interacts with DNAJC1 (via J domain). Component of an EIF2 complex at least composed of CELF1/CUGBP1, CALR, CALR3, EIF2S1, EIF2S2, HSP90B1 and HSPA5. Part of a large chaperone multiprotein complex comprising DNAJB11, HSP90B1, HSPA5, HYOU, PDIA2, PDIA4, PDIA6, PPIB, SDF2L1, UGGT1 and very small amounts of ERP29, but not, or at very low levels, CALR nor CANX. Interacts with TMEM132A and TRIM21. May form a complex with ERLEC1, OS9, SEL1L and SYVN1. Interacts with DNAJC10. Interacts with DNAJB9/ERdj4; leading to recruit HSPA5/BiP to ERN1/IRE1. Interacts with ERN1/IRE1 (via luminal domain); the interaction takes place following interaction with DNAJB9/ERdj4 and leads to inactivate ERN1/IRE1, the interaction also competitively inhibits ERN1 interaction with MANF. Interacts directly with MANF (via SAP domain); the interaction inhibits ATP binding to HSPA5/BiP and subsequent nucleotide exchange. Interacts with ERN1 (via luminal domain); the interaction competitively inhibits ERN1 interaction with MANF. Interacts with EIF2AK3/PERK (via luminal domain); interaction leads to inactivate EIF2AK3/PERK. Interacts with MX1. Interacts with METTL23. Interacts with CEMIP; the interaction induces calcium leakage from the endoplasmic reticulum and cell migration. Interacts with PCSK4 form; the interaction takes place in the endoplasmic reticulum. Interacts with CIPC. Interacts with CCDC88B (via C-terminus); the interaction opposes ERN1-mediated JNK activation, protecting against apoptosis. Interacts with INPP5K; necessary for INPP5K localization at the endoplasmic reticulum. Interacts with MANF; the interaction is direct. Interacts with LOXL2; leading to activate the ERN1/IRE1-XBP1 pathway of the unfolded protein response. Interacts with CLU under stressed condition; interaction increases CLU protein stability; facilitates its retrotranslocation and redistribution to the mitochondria; cooperatively suppress stress-induced apoptosis by stabilizing mitochondrial membrane integrity. Interacts with CCDC47. Interacts with CLN3. Interacts with ELAPOR1; may regulate the function of HSPA5 in apoptosis and cell proliferation. Interacts with CASP7. Interacts with ILDR2; the interaction stabilizes ILDR2 expression. Interacts with ADAM7. Post-translationally, in unstressed cells, AMPylation at Thr-519 by FICD inactivates the chaperome activity: AMPylated form is locked in a relatively inert state and only weakly stimulated by J domain-containing proteins. In response to endoplasmic reticulum stress, de-AMPylation by the same protein, FICD, restores the chaperone activity. Expressed in sperm (at protein level).

The protein resides in the endoplasmic reticulum lumen. The protein localises to the melanosome. It is found in the cytoplasm. Its subcellular location is the cell surface. The enzyme catalyses ATP + H2O = ADP + phosphate + H(+). The chaperone activity is regulated by ATP-induced allosteric coupling of the nucleotide-binding (NBD) and substrate-binding (SBD) domains. In the ADP-bound and nucleotide-free (apo) states, the two domains have little interaction. In contrast, in the ATP-bound state the two domains are tightly coupled, which results in drastically accelerated kinetics in both binding and release of polypeptide substrates. J domain-containing co-chaperones (DNAJB9/ERdj4 or DNAJC10/ERdj5) stimulate the ATPase activity and are required for efficient substrate recognition by HSPA5/BiP. Homooligomerization inactivates participating HSPA5/BiP protomers and probably act as reservoirs to store HSPA5/BiP molecules when they are not needed by the cell. Functionally, endoplasmic reticulum chaperone that plays a key role in protein folding and quality control in the endoplasmic reticulum lumen. Involved in the correct folding of proteins and degradation of misfolded proteins via its interaction with DNAJC10/ERdj5, probably to facilitate the release of DNAJC10/ERdj5 from its substrate. Acts as a key repressor of the EIF2AK3/PERK and ERN1/IRE1-mediated unfolded protein response (UPR). In the unstressed endoplasmic reticulum, recruited by DNAJB9/ERdj4 to the luminal region of ERN1/IRE1, leading to disrupt the dimerization of ERN1/IRE1, thereby inactivating ERN1/IRE1. Also binds and inactivates EIF2AK3/PERK in unstressed cells. Accumulation of misfolded protein in the endoplasmic reticulum causes release of HSPA5/BiP from ERN1/IRE1 and EIF2AK3/PERK, allowing their homodimerization and subsequent activation. Plays an auxiliary role in post-translational transport of small presecretory proteins across endoplasmic reticulum (ER). May function as an allosteric modulator for SEC61 channel-forming translocon complex, likely cooperating with SEC62 to enable the productive insertion of these precursors into SEC61 channel. Appears to specifically regulate translocation of precursors having inhibitory residues in their mature region that weaken channel gating. May also play a role in apoptosis and cell proliferation. The chain is Endoplasmic reticulum chaperone BiP from Mus musculus (Mouse).